A 150-amino-acid chain; its full sequence is MVSVKYVPSDMLINYVSGKLKEEKKIKEPNWVKFVKTGVSKEKPPLQDDWIYVRAASMLRKLYINGYLGISRMSSEYGGKVDRGSKRYHAASGSRSITRFLFHELESAGLVQKTQKGRSLSPQGMSLLDNASKEIIKQLAQKDPLYEKFI.

It belongs to the eukaryotic ribosomal protein eS19 family. In terms of assembly, part of the 30S ribosomal subunit.

Functionally, may be involved in maturation of the 30S ribosomal subunit. The sequence is that of Small ribosomal subunit protein eS19 from Thermoplasma volcanium (strain ATCC 51530 / DSM 4299 / JCM 9571 / NBRC 15438 / GSS1).